The sequence spans 495 residues: Germacrene A acid 8-beta-hydroxylase (495 aa).

The helical; Signal-anchor for type II membrane protein transmembrane segment at 3–23 threads the bilayer; the sequence is PFTTFSLVASSLILLICWALV. Asn103 carries an N-linked (GlcNAc...) asparagine glycan. Heme is bound at residue Cys433.

It belongs to the cytochrome P450 family. Requires heme as cofactor. As to expression, mostly expressed in leaves and flowers, and, to a lower extent, in roots and stems.

The protein resides in the membrane. It catalyses the reaction germacra-1(10),4,11(13)-trien-12-oate + reduced [NADPH--hemoprotein reductase] + O2 = 8beta-hydroxygermacra-1(10),4,11(13)-trien-12-oate + oxidized [NADPH--hemoprotein reductase] + H2O + H(+). It carries out the reaction germacra-1(10),4,11(13)-trien-12-oate + reduced [NADPH--hemoprotein reductase] + O2 = 8-epi-inunolide + oxidized [NADPH--hemoprotein reductase] + 2 H2O. The catalysed reaction is germacra-1(10),4,11(13)-trien-12-oate + reduced [NADPH--hemoprotein reductase] + O2 = 8alpha-hydroxygermacra-1(10),4,11(13)-trien-12-oate + oxidized [NADPH--hemoprotein reductase] + H2O + H(+). Its pathway is secondary metabolite biosynthesis; terpenoid biosynthesis. Its function is as follows. Involved in the biosynthesis of germacrene-derived sesquiterpene lactones. Hydroxylates germacrene A acid to 8-beta-hydroxy-germacrene A and 8-alpha-hydroxy-germacrene A acids. Unlike 8-alpha-hydroxy-germacrene A acid with is spontaneously converted into inunolide (12, 8-alpha), 8-beta-hydroxy-germacrene A cannot undergo spontaneous lactonization. This is Germacrene A acid 8-beta-hydroxylase from Inula hupehensis (Inula helianthus-aquatilis subsp. hupehensis).